The primary structure comprises 156 residues: C-type lectin lectoxin-Phi2 (156 aa).

The first 23 residues, 1–23, serve as a signal peptide directing secretion; it reads MGRFIFVSLGLLVLAFSLSGIGA. 3 disulfides stabilise this stretch: Cys-27–Cys-38, Cys-55–Cys-154, and Cys-129–Cys-146. Residues 34-155 enclose the C-type lectin domain; it reads HNVSCYKLIN…CNRRHRFLCK (122 aa). 2 N-linked (GlcNAc...) asparagine glycosylation sites follow: Asn-35 and Asn-109. The Mannose-binding signature appears at 119-121; sequence EPN. Residues Glu-127, Asn-142, and Asp-143 each coordinate Ca(2+).

Belongs to the true venom lectin family. As to expression, expressed by the venom gland.

The protein localises to the secreted. In terms of biological role, mannose-binding lectin which recognizes specific carbohydrate structures and agglutinates a variety of animal cells by binding to cell-surface glycoproteins and glycolipids. May be a calcium-dependent lectin. This Philodryas olfersii (Green snake) protein is C-type lectin lectoxin-Phi2.